The following is a 359-amino-acid chain: Type-1 angiotensin II receptor (359 aa).

The Extracellular portion of the chain corresponds to 1–25 (MILNSSTEDGIKRIQDDCPKAGRHN). Residue Asn-4 is glycosylated (N-linked (GlcNAc...) asparagine). Residues Gln-15 and Asp-17 each coordinate angiotensin II. 2 disulfides stabilise this stretch: Cys-18-Cys-274 and Cys-101-Cys-180. Residues 26-55 (YIFVMIPTLYSIIFVVGIFGNSLVVIVIYF) form a helical membrane-spanning segment. The Cytoplasmic portion of the chain corresponds to 56–61 (YMKLKT). The helical transmembrane segment at 62–89 (VASVFLLNLALADLCFLLTLPLWAVYTA) threads the bilayer. At 90-98 (MEYRWPFGN) the chain is on the extracellular side. The helical transmembrane segment at 99–125 (YLCKIASASVSFNLYASVFLLTCLSID) threads the bilayer. Residues 126 to 141 (RYLAIVHPMKSRLRRT) lie on the Cytoplasmic side of the membrane. A helical transmembrane segment spans residues 142–165 (MLVAKVTCIIIWLLAGLASLPAII). Over 166 to 190 (HRNVFFIENTNITVCAFHYESQNST) the chain is Extracellular. Residue Arg-167 coordinates angiotensin II. Asn-176 carries N-linked (GlcNAc...) asparagine glycosylation. Angiotensin II is bound by residues Phe-182, His-183, and Tyr-184. A glycan (N-linked (GlcNAc...) asparagine) is linked at Asn-188. Residues 191–216 (LPIGLGLTKNILGFLFPFLIILTSYT) traverse the membrane as a helical segment. Lys-199 provides a ligand contact to angiotensin II. The Cytoplasmic portion of the chain corresponds to 217–239 (LIWKALKKAYEIQKNKPRNDDIF). The chain crosses the membrane as a helical span at residues 240–268 (KIIMAIVLFFFFSWIPHQIFTFLDVLIQL). The Extracellular segment spans residues 269–278 (GIIRDCRIAD). Residues 279–304 (IVDTAMPITICIAYFNNCLNPLFYGF) form a helical membrane-spanning segment. Residues 305-359 (LGKKFKKYFLQLLKYIPPKAKSHSNLSTKMSTLSYRPSDNVSSSTKKPAPCFEVE) lie on the Cytoplasmic side of the membrane. Positions 335-350 (STLSYRPSDNVSSSTK) are enriched in polar residues. The interval 335-359 (STLSYRPSDNVSSSTKKPAPCFEVE) is disordered. A lipid anchor (S-palmitoyl cysteine) is attached at Cys-355.

This sequence belongs to the G-protein coupled receptor 1 family. As to quaternary structure, interacts with MAS1. Interacts with ARRB1. Interacts with FLNA (via filamin repeat 21); increases PKA-mediated phosphorylation of FLNA. In terms of processing, C-terminal Ser or Thr residues may be phosphorylated.

Its subcellular location is the cell membrane. Receptor for angiotensin II, a vasoconstricting peptide, which acts as a key regulator of blood pressure and sodium retention by the kidney. The activated receptor in turn couples to G-alpha proteins G(q) (GNAQ, GNA11, GNA14 or GNA15) and thus activates phospholipase C and increases the cytosolic Ca(2+) concentrations, which in turn triggers cellular responses such as stimulation of protein kinase C. This Pan troglodytes (Chimpanzee) protein is Type-1 angiotensin II receptor (AGTR1).